The chain runs to 77 residues: Putative defensin-like protein 158 (77 aa).

An N-terminal signal peptide occupies residues 1–24 (MANISWSHFLILMLVFSVVKKGKG). 4 disulfide bridges follow: Cys-31–Cys-77, Cys-41–Cys-60, Cys-46–Cys-71, and Cys-50–Cys-73.

This sequence belongs to the DEFL family.

The protein localises to the secreted. The chain is Putative defensin-like protein 158 (LCR23) from Arabidopsis thaliana (Mouse-ear cress).